Reading from the N-terminus, the 563-residue chain is Eukaryotic translation initiation factor 3 subunit D-1 (563 aa).

The tract at residues 98–136 (VQKPPHQRGRFRNMRGRGGRGRNPRGGLNNHHHHGMTTL) is disordered. Residues 100-120 (KPPHQRGRFRNMRGRGGRGRN) are compositionally biased toward basic residues. The interval 291 to 305 (EFDLLTVNESSVEPP) is RNA gate.

Belongs to the eIF-3 subunit D family. As to quaternary structure, component of the eukaryotic translation initiation factor 3 (eIF-3) complex. The eIF-3 complex interacts with pix.

The protein localises to the cytoplasm. Functionally, mRNA cap-binding component of the eukaryotic translation initiation factor 3 (eIF-3) complex, which is involved in protein synthesis of a specialized repertoire of mRNAs and, together with other initiation factors, stimulates binding of mRNA and methionyl-tRNAi to the 40S ribosome. The eIF-3 complex specifically targets and initiates translation of a subset of mRNAs involved in cell proliferation. In the eIF-3 complex, eif3d specifically recognizes and binds the 7-methylguanosine cap of a subset of mRNAs. The polypeptide is Eukaryotic translation initiation factor 3 subunit D-1 (Drosophila pseudoobscura pseudoobscura (Fruit fly)).